The primary structure comprises 463 residues: MDAPEQSFLREKSLAVEDQELAVGTLEDSHAAKPETNAAIELPNKSKPEKSAVEKDREDFREAVVKTLDRLLFVHKSFDIYHGVAGLYDFGPHGRTVELNILSLWRKCFVDEEDMMEVACTALTPEAVFNASGHVKKFTDLMVKDEVDGAFHRADHLVKSYCENRKKDPTISAENAAELDKVIAHVEDLSAEELGGVWNHCSTAPVTKNPLSHPPRPFNLMFQTSFGASGSLIGYLRPETAQGSFCNFKDYYNLNGRKLPFAVAQVGRVFRNEISPRQGLLRTREFTLAEIEHFVHPEHKSHSKFSDVAKLELLMFPREEQEKPGQFAKRLCLGEAVAKGHVNSETLGFFIGRVYLFLIRLGIDKERLRFRHHLANEMAHYATDCWDAEIECSYGWIECVGIADRSDYDLRAHSEKSGHALVAQEKLAEPIEVEKLAITPEMKELGPAFKGNQKNVVEALEVD.

The interval threonine 25–glutamate 54 is disordered. Residues asparagine 44–glutamate 54 show a composition bias toward basic and acidic residues. The substrate site is built by arginine 153 and glutamate 239. ATP-binding positions include arginine 271 to glutamate 273 and leucine 281 to phenylalanine 286. Substrate is bound by residues phenylalanine 286–glutamate 290 and asparagine 376. Glutamate 398 to cysteine 399 is an ATP binding site.

The protein belongs to the class-II aminoacyl-tRNA synthetase family. Homodimer.

The protein resides in the cytoplasm. It catalyses the reaction tRNA(Gly) + glycine + ATP = glycyl-tRNA(Gly) + AMP + diphosphate. In terms of biological role, catalyzes the attachment of glycine to tRNA(Gly). Is also able produce diadenosine tetraphosphate (Ap4A), a universal pleiotropic signaling molecule needed for cell regulation pathways, by direct condensation of 2 ATPs. The chain is Putative glycine--tRNA ligase, cytoplasmic from Arabidopsis thaliana (Mouse-ear cress).